The primary structure comprises 202 residues: UMP-CMP kinase 3 (202 aa).

Residue 24–29 participates in ATP binding; that stretch reads GSGKGT. Residues 44 to 73 form an NMP region; sequence SAGDLLRAEIKSGSENGTMIQNMIKEGKIV. A ribonucleoside 5'-phosphate-binding positions include Arg-50, 71-73, and 98-101; these read KIV and GFPR. Asn-105 is a binding site for CMP. The segment at 136-144 is LID; the sequence is GRNQGREDD. An ATP-binding site is contributed by Arg-137. Arg-141 and Arg-152 together coordinate a ribonucleoside 5'-phosphate. Lys-180 contacts ATP.

In terms of assembly, monomer. Requires Mg(2+) as cofactor.

The protein localises to the cytoplasm. It localises to the nucleus. The enzyme catalyses CMP + ATP = CDP + ADP. It carries out the reaction dCMP + ATP = dCDP + ADP. It catalyses the reaction UMP + ATP = UDP + ADP. Its function is as follows. Catalyzes the phosphorylation of pyrimidine nucleoside monophosphates at the expense of ATP. Plays an important role in de novo pyrimidine nucleotide biosynthesis. Has preference for UMP and CMP as phosphate acceptors. Does not act on dCMP and dUMP. This Arabidopsis thaliana (Mouse-ear cress) protein is UMP-CMP kinase 3 (UMK3).